The chain runs to 144 residues: Transcription antitermination protein NusB (144 aa).

Belongs to the NusB family.

Involved in transcription antitermination. Required for transcription of ribosomal RNA (rRNA) genes. Binds specifically to the boxA antiterminator sequence of the ribosomal RNA (rrn) operons. The sequence is that of Transcription antitermination protein NusB from Streptococcus agalactiae serotype Ia (strain ATCC 27591 / A909 / CDC SS700).